A 68-amino-acid polypeptide reads, in one-letter code: DNA-directed RNA polymerase subunit omega (68 aa).

Belongs to the RNA polymerase subunit omega family. As to quaternary structure, the RNAP catalytic core consists of 2 alpha, 1 beta, 1 beta' and 1 omega subunit. When a sigma factor is associated with the core the holoenzyme is formed, which can initiate transcription.

It carries out the reaction RNA(n) + a ribonucleoside 5'-triphosphate = RNA(n+1) + diphosphate. In terms of biological role, promotes RNA polymerase assembly. Latches the N- and C-terminal regions of the beta' subunit thereby facilitating its interaction with the beta and alpha subunits. This chain is DNA-directed RNA polymerase subunit omega, found in Desulfitobacterium hafniense (strain DSM 10664 / DCB-2).